An 81-amino-acid polypeptide reads, in one-letter code: Photosystem I iron-sulfur center (81 aa).

4Fe-4S ferredoxin-type domains are found at residues 2–31 (SHAV…MVPW) and 39–68 (IAAS…IRVY). [4Fe-4S] cluster contacts are provided by Cys11, Cys14, Cys17, Cys21, Cys48, Cys51, Cys54, and Cys58.

As to quaternary structure, the cyanobacterial PSI reaction center is composed of one copy each of PsaA,B,C,D,E,F,I,J,K,L,M and X, and forms trimeric complexes. Requires [4Fe-4S] cluster as cofactor.

Its subcellular location is the cellular thylakoid membrane. The catalysed reaction is reduced [plastocyanin] + hnu + oxidized [2Fe-2S]-[ferredoxin] = oxidized [plastocyanin] + reduced [2Fe-2S]-[ferredoxin]. Its function is as follows. Apoprotein for the two 4Fe-4S centers FA and FB of photosystem I (PSI); essential for photochemical activity. FB is the terminal electron acceptor of PSI, donating electrons to ferredoxin. The C-terminus interacts with PsaA/B/D and helps assemble the protein into the PSI complex. Required for binding of PsaD and PsaE to PSI. PSI is a plastocyanin/cytochrome c6-ferredoxin oxidoreductase, converting photonic excitation into a charge separation, which transfers an electron from the donor P700 chlorophyll pair to the spectroscopically characterized acceptors A0, A1, FX, FA and FB in turn. In Prochlorococcus marinus (strain MIT 9313), this protein is Photosystem I iron-sulfur center.